Reading from the N-terminus, the 311-residue chain is Probable acetylxylan esterase A (311 aa).

The signal sequence occupies residues 1–19 (MAPFSFILTVLLYALTCSA). The active-site Charge relay system is the Ser153. N-linked (GlcNAc...) asparagine glycans are attached at residues Asn197 and Asn224.

This sequence belongs to the carbohydrate esterase 1 (CE1) family. AxeA subfamily. In terms of assembly, monomer.

The protein localises to the secreted. It catalyses the reaction Deacetylation of xylans and xylo-oligosaccharides.. Its pathway is glycan degradation; xylan degradation. In terms of biological role, acetylxylan esterase involved in the hydrolysis of xylan, a major structural heterogeneous polysaccharide found in plant biomass representing the second most abundant polysaccharide in the biosphere, after cellulose. Degrades acetylated xylans by cleaving acetyl side groups from the hetero-xylan backbone. The polypeptide is Probable acetylxylan esterase A (axeA) (Aspergillus terreus (strain NIH 2624 / FGSC A1156)).